A 257-amino-acid chain; its full sequence is Anamorsin homolog (257 aa).

Residues 1 to 134 (MSDRKNVLFV…KVGSSDKVTL (134 aa)) are N-terminal SAM-like domain. The interval 135–168 (NPEMKENVVSAWKLDDNNSETISEDDLLEADDLI) is linker. [2Fe-2S] cluster contacts are provided by C178, C187, C190, and C192. Residues 178–192 (CATTKKAKACKDCSC) are fe-S binding site A. [4Fe-4S] cluster contacts are provided by C218, C221, C229, and C232. 2 consecutive short sequence motifs (cx2C motif) follow at residues 218 to 221 (CGSC) and 229 to 232 (CASC). The tract at residues 218-232 (CGSCYLGDAFRCASC) is fe-S binding site B.

The protein belongs to the anamorsin family. Monomer. Requires [2Fe-2S] cluster as cofactor. [4Fe-4S] cluster is required as a cofactor.

It is found in the cytoplasm. Its subcellular location is the mitochondrion intermembrane space. Component of the cytosolic iron-sulfur (Fe-S) protein assembly (CIA) machinery. Required for the maturation of extramitochondrial Fe-S proteins. Part of an electron transfer chain functioning in an early step of cytosolic Fe-S biogenesis, facilitating the de novo assembly of a [4Fe-4S] cluster on the cytosolic Fe-S scaffold complex. Electrons are transferred from NADPH via a FAD- and FMN-containing diflavin oxidoreductase. Together with the diflavin oxidoreductase, also required for the assembly of the diferric tyrosyl radical cofactor of ribonucleotide reductase (RNR), probably by providing electrons for reduction during radical cofactor maturation in the catalytic small subunit. This chain is Anamorsin homolog, found in Acyrthosiphon pisum (Pea aphid).